The chain runs to 390 residues: 3-ketoacyl-CoA thiolase (390 aa).

Cysteine 95 (acyl-thioester intermediate) is an active-site residue. Residues histidine 346 and cysteine 376 each act as proton acceptor in the active site.

Belongs to the thiolase-like superfamily. Thiolase family. As to quaternary structure, heterotetramer of two alpha chains (FadB) and two beta chains (FadA).

The protein localises to the cytoplasm. It catalyses the reaction an acyl-CoA + acetyl-CoA = a 3-oxoacyl-CoA + CoA. It participates in lipid metabolism; fatty acid beta-oxidation. Its function is as follows. Catalyzes the final step of fatty acid oxidation in which acetyl-CoA is released and the CoA ester of a fatty acid two carbons shorter is formed. The polypeptide is 3-ketoacyl-CoA thiolase (Acinetobacter baumannii (strain ATCC 17978 / DSM 105126 / CIP 53.77 / LMG 1025 / NCDC KC755 / 5377)).